Here is a 66-residue protein sequence, read N- to C-terminus: Surface composition regulator (66 aa).

This sequence belongs to the GlgS family.

Major determinant of cell surface composition. Negatively regulates motility, adhesion and synthesis of biofilm exopolysaccharides. This chain is Surface composition regulator, found in Escherichia coli O127:H6 (strain E2348/69 / EPEC).